A 311-amino-acid polypeptide reads, in one-letter code: Cytochrome f (311 aa).

The first 27 residues, 1 to 27 (MRRHLSLVLGSLVIGLALLIAPGASWA), serve as a signal peptide directing secretion. The heme site is built by Tyr28, Cys48, Cys51, and His52. A helical transmembrane segment spans residues 277–297 (IYGLLAFFAAVAIAQIMLVLK).

Belongs to the cytochrome f family. As to quaternary structure, the 4 large subunits of the cytochrome b6-f complex are cytochrome b6, subunit IV (17 kDa polypeptide, PetD), cytochrome f and the Rieske protein, while the 4 small subunits are PetG, PetL, PetM and PetN. The complex functions as a dimer. Heme serves as cofactor.

The protein localises to the cellular thylakoid membrane. In terms of biological role, component of the cytochrome b6-f complex, which mediates electron transfer between photosystem II (PSII) and photosystem I (PSI), cyclic electron flow around PSI, and state transitions. The sequence is that of Cytochrome f from Synechococcus sp. (strain CC9902).